The sequence spans 78 residues: Acyl carrier protein (78 aa).

One can recognise a Carrier domain in the interval 2–77 (SDILERVRKI…DAVKFITEKT (76 aa)). Ser37 is subject to O-(pantetheine 4'-phosphoryl)serine.

Belongs to the acyl carrier protein (ACP) family. In terms of processing, 4'-phosphopantetheine is transferred from CoA to a specific serine of apo-ACP by AcpS. This modification is essential for activity because fatty acids are bound in thioester linkage to the sulfhydryl of the prosthetic group.

The protein localises to the cytoplasm. The protein operates within lipid metabolism; fatty acid biosynthesis. Functionally, carrier of the growing fatty acid chain in fatty acid biosynthesis. This Caulobacter vibrioides (strain ATCC 19089 / CIP 103742 / CB 15) (Caulobacter crescentus) protein is Acyl carrier protein.